The chain runs to 208 residues: ATP phosphoribosyltransferase (208 aa).

This sequence belongs to the ATP phosphoribosyltransferase family. Short subfamily. Heteromultimer composed of HisG and HisZ subunits.

It is found in the cytoplasm. It catalyses the reaction 1-(5-phospho-beta-D-ribosyl)-ATP + diphosphate = 5-phospho-alpha-D-ribose 1-diphosphate + ATP. It participates in amino-acid biosynthesis; L-histidine biosynthesis; L-histidine from 5-phospho-alpha-D-ribose 1-diphosphate: step 1/9. Functionally, catalyzes the condensation of ATP and 5-phosphoribose 1-diphosphate to form N'-(5'-phosphoribosyl)-ATP (PR-ATP). Has a crucial role in the pathway because the rate of histidine biosynthesis seems to be controlled primarily by regulation of HisG enzymatic activity. The sequence is that of ATP phosphoribosyltransferase from Oceanobacillus iheyensis (strain DSM 14371 / CIP 107618 / JCM 11309 / KCTC 3954 / HTE831).